We begin with the raw amino-acid sequence, 420 residues long: Calsequestrin-1 (420 aa).

An N-terminal signal peptide occupies residues 1–22 (MKGPWLVLAALCLSLANLGPRG). The N-linked (GlcNAc...) asparagine glycan is linked to Asn338. A disordered region spans residues 369-420 (LEGEVNTEDDDDDDDDDDDDDDDDDDDDDDDDDDDDDDDDDDDDDDDDDDDD).

The protein belongs to the calsequestrin family. Monomer; increases in response to a depletion of intracellular calcium. Homodimer. Homotetramer and homopolymer. Can form linear homooligomers. Ca(2+) ions promote oligomerization. In terms of tissue distribution, detected in skeletal muscle (at protein level). Detected in skeletal muscle.

Its subcellular location is the endoplasmic reticulum. The protein resides in the sarcoplasmic reticulum. It localises to the sarcoplasmic reticulum lumen. The protein localises to the sarcoplasmic reticulum membrane. It is found in the mitochondrion matrix. Its function is as follows. Calsequestrin is a high-capacity, moderate affinity, calcium-binding protein and thus acts as an internal calcium store in muscle. Calcium ions are bound by clusters of acidic residues at the protein surface, often at the interface between subunits. Can bind around 80 Ca(2+) ions. Regulates the release of lumenal Ca(2+) via the calcium release channel RYR1; this plays an important role in triggering muscle contraction. Negatively regulates store-operated Ca(2+) entry (SOCE) activity. The protein is Calsequestrin-1 of Pelophylax lessonae (Pool frog).